The primary structure comprises 1220 residues: Putative cell agglutination protein SPAPB2C8.01 (1220 aa).

A signal peptide spans methionine 1 to proline 21. 4 N-linked (GlcNAc...) asparagine glycosylation sites follow: asparagine 44, asparagine 72, asparagine 131, and asparagine 160. Repeat copies occupy residues asparagine 110 to alanine 145, glycine 146 to alanine 181, glycine 182 to alanine 217, glycine 218 to alanine 253, glycine 254 to alanine 289, glycine 290 to alanine 325, glycine 326 to alanine 361, glycine 362 to alanine 397, glycine 398 to alanine 433, glycine 434 to alanine 469, glycine 470 to alanine 505, glycine 506 to alanine 541, glycine 542 to alanine 577, glycine 578 to alanine 613, glycine 614 to alanine 649, glycine 650 to alanine 685, glycine 686 to alanine 721, glycine 722 to alanine 757, glycine 758 to alanine 793, glycine 794 to alanine 829, glycine 830 to alanine 865, glycine 866 to alanine 901, glycine 902 to glycine 937, and serine 938 to proline 973. The segment at asparagine 110–proline 973 is 24 X 36 AA approximate tandem repeats. The N-linked (GlcNAc...) asparagine glycan is linked to asparagine 232. A glycan (N-linked (GlcNAc...) asparagine) is linked at asparagine 304. Asparagine 376 carries N-linked (GlcNAc...) asparagine glycosylation. The N-linked (GlcNAc...) asparagine glycan is linked to asparagine 448. Asparagine 520 carries an N-linked (GlcNAc...) asparagine glycan. Asparagine 592 is a glycosylation site (N-linked (GlcNAc...) asparagine). The PA14 domain maps to phenylalanine 1039–alanine 1202.

Belongs to the mam3/map4 family.

The protein resides in the cell surface. In terms of biological role, may be involved in agglutination during conjugation or other aspects of colony formation. This Schizosaccharomyces pombe (strain 972 / ATCC 24843) (Fission yeast) protein is Putative cell agglutination protein SPAPB2C8.01.